We begin with the raw amino-acid sequence, 297 residues long: Pyridoxal 5'-phosphate synthase subunit PdxS (297 aa).

Position 27 (Asp27) interacts with D-ribose 5-phosphate. The active-site Schiff-base intermediate with D-ribose 5-phosphate is the Lys84. Gly156 provides a ligand contact to D-ribose 5-phosphate. Arg168 serves as a coordination point for D-glyceraldehyde 3-phosphate. D-ribose 5-phosphate contacts are provided by residues Gly217 and 238 to 239 (GS).

The protein belongs to the PdxS/SNZ family. As to quaternary structure, in the presence of PdxT, forms a dodecamer of heterodimers.

It carries out the reaction aldehydo-D-ribose 5-phosphate + D-glyceraldehyde 3-phosphate + L-glutamine = pyridoxal 5'-phosphate + L-glutamate + phosphate + 3 H2O + H(+). It functions in the pathway cofactor biosynthesis; pyridoxal 5'-phosphate biosynthesis. Catalyzes the formation of pyridoxal 5'-phosphate from ribose 5-phosphate (RBP), glyceraldehyde 3-phosphate (G3P) and ammonia. The ammonia is provided by the PdxT subunit. Can also use ribulose 5-phosphate and dihydroxyacetone phosphate as substrates, resulting from enzyme-catalyzed isomerization of RBP and G3P, respectively. The polypeptide is Pyridoxal 5'-phosphate synthase subunit PdxS (Corynebacterium efficiens (strain DSM 44549 / YS-314 / AJ 12310 / JCM 11189 / NBRC 100395)).